Reading from the N-terminus, the 1377-residue chain is DNA-directed RNA polymerase subunit beta'' (1377 aa).

Residues cysteine 220, cysteine 291, cysteine 298, and cysteine 301 each contribute to the Zn(2+) site.

This sequence belongs to the RNA polymerase beta' chain family. RpoC2 subfamily. In terms of assembly, in plastids the minimal PEP RNA polymerase catalytic core is composed of four subunits: alpha, beta, beta', and beta''. When a (nuclear-encoded) sigma factor is associated with the core the holoenzyme is formed, which can initiate transcription. Zn(2+) is required as a cofactor.

The protein localises to the plastid. The protein resides in the chloroplast. The catalysed reaction is RNA(n) + a ribonucleoside 5'-triphosphate = RNA(n+1) + diphosphate. DNA-dependent RNA polymerase catalyzes the transcription of DNA into RNA using the four ribonucleoside triphosphates as substrates. The polypeptide is DNA-directed RNA polymerase subunit beta'' (Nandina domestica (Heavenly bamboo)).